The chain runs to 314 residues: uncharacterized protein (314 aa).

The protein to M.leprae ML0607.

This is an uncharacterized protein from Mycobacterium bovis (strain ATCC BAA-935 / AF2122/97).